We begin with the raw amino-acid sequence, 89 residues long: Small ribosomal subunit protein uS15 (89 aa).

Belongs to the universal ribosomal protein uS15 family. Part of the 30S ribosomal subunit. Forms a bridge to the 50S subunit in the 70S ribosome, contacting the 23S rRNA.

Its function is as follows. One of the primary rRNA binding proteins, it binds directly to 16S rRNA where it helps nucleate assembly of the platform of the 30S subunit by binding and bridging several RNA helices of the 16S rRNA. Forms an intersubunit bridge (bridge B4) with the 23S rRNA of the 50S subunit in the ribosome. The chain is Small ribosomal subunit protein uS15 from Blochmanniella pennsylvanica (strain BPEN).